We begin with the raw amino-acid sequence, 505 residues long: Catalase (505 aa).

Active-site residues include histidine 56 and asparagine 129. Residue tyrosine 339 participates in heme binding.

It belongs to the catalase family. The cofactor is heme.

The protein localises to the cytoplasm. The enzyme catalyses 2 H2O2 = O2 + 2 H2O. Decomposes hydrogen peroxide into water and oxygen; serves to protect cells from the toxic effects of hydrogen peroxide. The chain is Catalase (katA) from Helicobacter pylori (strain ATCC 700392 / 26695) (Campylobacter pylori).